A 114-amino-acid polypeptide reads, in one-letter code: MKYQILFGVVFLTLLSYCYSEIEDEFENFVDEEMVEADDPFSLARKDKENCIPKHHECTSDRHGCCRGSMFKYKCQCVKIVNAQKEETERCACITPGLHKAAEFVVQLFKKVIA.

The signal sequence occupies residues 1 to 20 (MKYQILFGVVFLTLLSYCYS). Residues 21 to 45 (EIEDEFENFVDEEMVEADDPFSLAR) constitute a propeptide that is removed on maturation. 3 cysteine pairs are disulfide-bonded: Cys51–Cys66, Cys65–Cys93, and Cys77–Cys91.

This sequence belongs to the neurotoxin 19 (CSTX) family. 04 (U1-Lctx) subfamily. In terms of tissue distribution, expressed by the venom gland.

It localises to the secreted. This Lycosa singoriensis (Wolf spider) protein is U5-lycotoxin-Ls1a.